The sequence spans 218 residues: DNA-directed RNA polymerases IV and V subunit 5B (218 aa).

Belongs to the archaeal Rpo5/eukaryotic RPB5 RNA polymerase subunit family. Component of the RNA polymerase IV and V complexes. Interacts with NRPD1. As to expression, expressed inleaves, flower buds, flowers and siliques.

Its subcellular location is the nucleus. In terms of biological role, DNA-dependent RNA polymerase catalyzes the transcription of DNA into RNA using the four ribonucleoside triphosphates as substrates. Component of RNA polymerases IV and V which mediate short-interfering RNAs (siRNA) accumulation and subsequent RNA-directed DNA methylation-dependent (RdDM) transcriptional gene silencing (TGS) of endogenous repeated sequences, including transposable elements. The chain is DNA-directed RNA polymerases IV and V subunit 5B (NRPD5B) from Arabidopsis thaliana (Mouse-ear cress).